Reading from the N-terminus, the 373-residue chain is Dual-specificity RNA methyltransferase RlmN (373 aa).

Residue Glu-94 is the Proton acceptor of the active site. Residues 100 to 339 form the Radical SAM core domain; it reads EDDRATLCVS…VTIRKTRGDD (240 aa). Cysteines 107 and 344 form a disulfide. 3 residues coordinate [4Fe-4S] cluster: Cys-114, Cys-118, and Cys-121. Residues 168–169, Ser-200, 222–224, and Asn-301 each bind S-adenosyl-L-methionine; these read GE and SLH. Cys-344 acts as the S-methylcysteine intermediate in catalysis.

It belongs to the radical SAM superfamily. RlmN family. The cofactor is [4Fe-4S] cluster.

The protein localises to the cytoplasm. It catalyses the reaction adenosine(2503) in 23S rRNA + 2 reduced [2Fe-2S]-[ferredoxin] + 2 S-adenosyl-L-methionine = 2-methyladenosine(2503) in 23S rRNA + 5'-deoxyadenosine + L-methionine + 2 oxidized [2Fe-2S]-[ferredoxin] + S-adenosyl-L-homocysteine. The catalysed reaction is adenosine(37) in tRNA + 2 reduced [2Fe-2S]-[ferredoxin] + 2 S-adenosyl-L-methionine = 2-methyladenosine(37) in tRNA + 5'-deoxyadenosine + L-methionine + 2 oxidized [2Fe-2S]-[ferredoxin] + S-adenosyl-L-homocysteine. In terms of biological role, specifically methylates position 2 of adenine 2503 in 23S rRNA and position 2 of adenine 37 in tRNAs. m2A2503 modification seems to play a crucial role in the proofreading step occurring at the peptidyl transferase center and thus would serve to optimize ribosomal fidelity. The sequence is that of Dual-specificity RNA methyltransferase RlmN from Vibrio cholerae serotype O1 (strain M66-2).